Here is a 127-residue protein sequence, read N- to C-terminus: Small integral membrane protein 33 (127 aa).

N15 is a glycosylation site (N-linked (GlcNAc...) asparagine). A helical transmembrane segment spans residues 38 to 58; it reads PLLAAIIAAFVLLAICIVLAV.

The protein localises to the membrane. This is Small integral membrane protein 33 from Mus musculus (Mouse).